Here is a 700-residue protein sequence, read N- to C-terminus: Methionine synthase reductase (700 aa).

A Flavodoxin-like domain is found at 4-147 (FLLLYATQRG…VVEPWIDGLW (144 aa)). Residues 10 to 14 (TQRGQ) and 93 to 124 (LLGLGDSEYTYFCNGGKVIDKRLQELGAQHFY) each bind FMN. The tract at residues 168-247 (TLAQASDAPL…SSLSIPAVSP (80 aa)) is hinge. Residues Ser-173 and Ser-190 each carry the phosphoserine modification. One can recognise an FAD-binding FR-type domain in the interval 272 to 534 (DPIFQVPISK…PRATNSFHLP (263 aa)). Residue Lys-292 participates in NADP(+) binding. Residues 452-455 (RPYS) and 488-491 (GVCT) each bind FAD. NADP(+) is bound by residues 611–612 (SR), 626–628 (YVQ), and Asp-661. Trp-699 serves as a coordination point for FAD.

As to quaternary structure, forms a multiprotein complex with MMACHC, MMADHC and MTR. FAD is required as a cofactor. It depends on FMN as a cofactor.

It localises to the cytoplasm. The catalysed reaction is 2 methylcob(III)alamin-[methionine synthase] + 2 S-adenosyl-L-homocysteine + NADP(+) + H(+) = 2 cob(II)alamin-[methionine synthase] + 2 S-adenosyl-L-methionine + NADPH. It carries out the reaction 2 cob(II)alamin + A + 2 H2O + 2 H(+) = 2 aquacob(III)alamin + AH2. In terms of biological role, key enzyme in methionine and folate homeostasis responsible for the reactivation of methionine synthase (MTR/MS) activity by catalyzing the reductive methylation of MTR-bound cob(II)alamin. Cobalamin (vitamin B12) forms a complex with MTR to serve as an intermediary in methyl transfer reactions that cycles between MTR-bound methylcob(III)alamin and MTR bound-cob(I)alamin forms, and occasional oxidative escape of the cob(I)alamin intermediate during the catalytic cycle leads to the inactive cob(II)alamin species. The processing of cobalamin in the cytosol occurs in a multiprotein complex composed of at least MMACHC, MMADHC, MTRR and MTR which may contribute to shuttle safely and efficiently cobalamin towards MTR in order to produce methionine. Also necessary for the utilization of methyl groups from the folate cycle, thereby affecting transgenerational epigenetic inheritance. Also acts as a molecular chaperone for methionine synthase by stabilizing apoMTR and incorporating methylcob(III)alamin into apoMTR to form the holoenzyme. Also serves as an aquacob(III)alamin reductase by reducing aquacob(III)alamin to cob(II)alamin; this reduction leads to stimulation of the conversion of apoMTR and aquacob(III)alamin to MTR holoenzyme. The sequence is that of Methionine synthase reductase (Mtrr) from Rattus norvegicus (Rat).